The primary structure comprises 418 residues: Gamma-glutamyl phosphate reductase (418 aa).

Belongs to the gamma-glutamyl phosphate reductase family.

Its subcellular location is the cytoplasm. The enzyme catalyses L-glutamate 5-semialdehyde + phosphate + NADP(+) = L-glutamyl 5-phosphate + NADPH + H(+). It functions in the pathway amino-acid biosynthesis; L-proline biosynthesis; L-glutamate 5-semialdehyde from L-glutamate: step 2/2. In terms of biological role, catalyzes the NADPH-dependent reduction of L-glutamate 5-phosphate into L-glutamate 5-semialdehyde and phosphate. The product spontaneously undergoes cyclization to form 1-pyrroline-5-carboxylate. This Parafrankia sp. (strain EAN1pec) protein is Gamma-glutamyl phosphate reductase.